The chain runs to 344 residues: Fructose-1,6-bisphosphatase class 1 (344 aa).

Residues glutamate 91, aspartate 110, leucine 112, and aspartate 113 each contribute to the Mg(2+) site. Substrate is bound by residues 113-116 (DGSS) and asparagine 200. Glutamate 272 lines the Mg(2+) pocket.

The protein belongs to the FBPase class 1 family. In terms of assembly, homotetramer. It depends on Mg(2+) as a cofactor.

Its subcellular location is the cytoplasm. It carries out the reaction beta-D-fructose 1,6-bisphosphate + H2O = beta-D-fructose 6-phosphate + phosphate. The protein operates within carbohydrate biosynthesis; Calvin cycle. This is Fructose-1,6-bisphosphatase class 1 from Rhodopseudomonas palustris (strain BisA53).